A 429-amino-acid polypeptide reads, in one-letter code: Glutamate-1-semialdehyde 2,1-aminomutase (429 aa).

K267 carries the post-translational modification N6-(pyridoxal phosphate)lysine.

The protein belongs to the class-III pyridoxal-phosphate-dependent aminotransferase family. HemL subfamily. As to quaternary structure, homodimer. It depends on pyridoxal 5'-phosphate as a cofactor.

Its subcellular location is the cytoplasm. The catalysed reaction is (S)-4-amino-5-oxopentanoate = 5-aminolevulinate. It functions in the pathway porphyrin-containing compound metabolism; protoporphyrin-IX biosynthesis; 5-aminolevulinate from L-glutamyl-tRNA(Glu): step 2/2. The sequence is that of Glutamate-1-semialdehyde 2,1-aminomutase from Stenotrophomonas maltophilia (strain K279a).